A 603-amino-acid polypeptide reads, in one-letter code: MTMYATMTTLALTSLIPPILTTFINPNKKSSYPHYVKSIVASTFIISLFPTTMFLCLDQEAIISSWHWATTQTIQLSLSFKLDYFSMMFIPVALFVTWSIMEFSLWYMNSDPNINQFFKYLLIFLITMLILVTANNLFQLFIGWEGVGIMSFLLIGWWYARTDANTAAVQAILYNRIGDIGFILALAWFLLHSNSWDPQQMSLLNTNPNLIPLLGFLLAAAGKSAQLGLHPWLPSAMEGPTPVSALLHSSTMVVAGVFLLIRFRHLAENNSLAQTLTLCLGAITTLFAAVCALTQNDIKKIVAFSTSSQLGLMVATIGIGQPHLAFLHICTHAFFKAMLFMCSGSIIHNLNNEQDIRKMGGLLKAMPLTSTSLAIGSLALMGMPFLTGFYSKDLIIETANMSHTNAWALSIILIATSLTSAYSTRMILLTLTGQPRFPTFANINENYSTLLNPIKRLTIGSLFAGFFITNNILPTSVPQMTIPLYLKLTALSITLLGLLTALDLNYLTNKLKMKHPPHTFYFSNMLGFYPNITHRTIPYLGLLMSQNLPLLLLDLIWLEKLLPKTISQHQISASITTSTQKGLIKLYFLSFFFPLLLILLLIT.

A run of 17 helical transmembrane segments spans residues 4–24 (YATM…TTFI), 38–58 (SIVA…LCLD), 87–107 (MMFI…SLWY), 114–134 (INQF…LVTA), 140–160 (LFIG…WWYA), 171–191 (AILY…WFLL), 210–230 (LIPL…LGLH), 241–261 (TPVS…FLLI), 272–292 (LAQT…AVCA), 301–320 (IVAF…IGIG), 325–347 (AFLH…GSII), 370–390 (STSL…TGFY), 407–429 (WALS…MILL), 457–477 (LTIG…PTSV), 482–502 (IPLY…LTAL), 537–557 (IPYL…DLIW), and 582–602 (GLIK…LLLI).

It belongs to the complex I subunit 5 family. As to quaternary structure, core subunit of respiratory chain NADH dehydrogenase (Complex I) which is composed of 45 different subunits.

The protein localises to the mitochondrion inner membrane. The enzyme catalyses a ubiquinone + NADH + 5 H(+)(in) = a ubiquinol + NAD(+) + 4 H(+)(out). Core subunit of the mitochondrial membrane respiratory chain NADH dehydrogenase (Complex I) which catalyzes electron transfer from NADH through the respiratory chain, using ubiquinone as an electron acceptor. Essential for the catalytic activity and assembly of complex I. In Gorilla gorilla gorilla (Western lowland gorilla), this protein is NADH-ubiquinone oxidoreductase chain 5 (MT-ND5).